The following is a 437-amino-acid chain: Ribosomal protein uS12 methylthiotransferase RimO (437 aa).

An MTTase N-terminal domain is found at 9–125 (PAIFLLSLGC…VLAAIGAHYC (117 aa)). Residues Cys-18, Cys-54, Cys-88, Cys-149, Cys-153, and Cys-156 each contribute to the [4Fe-4S] cluster site. Residues 135–364 (LTPPHYAFLK…MELQESIAAS (230 aa)) enclose the Radical SAM core domain. The TRAM domain maps to 367–434 (RKLEGQTLTV…AYELFGRVGS (68 aa)).

It belongs to the methylthiotransferase family. RimO subfamily. [4Fe-4S] cluster is required as a cofactor.

It localises to the cytoplasm. The enzyme catalyses L-aspartate(89)-[ribosomal protein uS12]-hydrogen + (sulfur carrier)-SH + AH2 + 2 S-adenosyl-L-methionine = 3-methylsulfanyl-L-aspartate(89)-[ribosomal protein uS12]-hydrogen + (sulfur carrier)-H + 5'-deoxyadenosine + L-methionine + A + S-adenosyl-L-homocysteine + 2 H(+). In terms of biological role, catalyzes the methylthiolation of an aspartic acid residue of ribosomal protein uS12. This chain is Ribosomal protein uS12 methylthiotransferase RimO, found in Chlorobaculum parvum (strain DSM 263 / NCIMB 8327) (Chlorobium vibrioforme subsp. thiosulfatophilum).